The primary structure comprises 777 residues: MANSSSRYSVLTAAHWGPMLVETDGETVFSSRGALATGMENSLQSAVRDQVHSNTRVRFPMVRKGFLASPENPQGIRGQDEFVRVSWDEALDLIHQQHKRIREAYGPASIFAGSYGWRSNGVLHKASTLLQRYMALAGGYTGHLGDYSTGAAQAIMPYVVGGSEVYQQQTSWPLVLEHSDVVVLWSANPLNTLKIAWNASDEQGLSYFSALRDSGKKLICIDPMRSETVDFFGDKMEWVAPHMGTDVALMLGIAHTLVENGWHDEAFLARCTTGYAVFASYLLGESDGIAKTAEWAAEICGVGAAKIRELAAIFHQNTTMLMAGWGMQRQQFGEQKHWMIVTLAAMLGQIGTPGGGFGLSYHFANGGNPTRRSAVLSSMQGSLPGGCDAVDKIPVARIVEALENPGGAYQHNGMNRHFPDIRFIWWAGGANFTHHQDTNRLIRAWQKPELVVISECFWTAAAKHADIVLPATTSFERNDLTMTGDYSNQHLVPMKQVVPPRYEARNDFDVFAELSERWEKGGYARFTEGKSELQWLETFYNVARQRGASQQVELPPFAEFWQANQLIEMPENPDSERFIRFADFCRDPLAHPLKTASGKIEIFSQRIADYGYPDCPGHPMWLEPDEWQGNAEPEQLQVLSAHPAHRLHSQLNYSSLRELYAVANREPVTIHPDDAQERGIQDGDTVRLWNARGQILAGAVISEGIKPGVICIHEGAWPDLDLTADGICKNGAVNVLTKDLPSSRLGNGCAGNTALAWLEKYNGPELTLTAFEPPASS.

Serine 148 contacts Mo-bis(molybdopterin guanine dinucleotide).

The protein belongs to the prokaryotic molybdopterin-containing oxidoreductase family. Requires Mo-bis(molybdopterin guanine dinucleotide) as cofactor.

The catalysed reaction is [thioredoxin]-disulfide + L-methionine + H2O = L-methionine (S)-S-oxide + [thioredoxin]-dithiol. Its function is as follows. This enzyme may serve as a scavenger, allowing the cell to utilize biotin sulfoxide as a biotin source. It reduces a spontaneous oxidation product of biotin, D-biotin D-sulfoxide (BSO or BDS), back to biotin. Also exhibits methionine-(S)-sulfoxide (Met-S-SO) reductase activity, acting specifically on the (S) enantiomer in the free, but not the protein-bound form. It thus plays a role in assimilation of oxidized methionines. This Escherichia coli (strain K12) protein is Biotin sulfoxide reductase (bisC).